A 319-amino-acid polypeptide reads, in one-letter code: MSDNTLVSDYGMCEEEQMARIAWFYYHDGLTQSEISERLGLTRLKVSRLLEKGHQSGIIRVQINSRFEGCLEYENALRNHFALQNIRVLPALPDADIGLRLGIGAAHMLMESLRPQQLLAVGFGEATMTTLKHLSGFISAQQIRLVTLSGGVGPYMTGIGQLDAACSVSIMPAPLRASSQEIACTLRNENSVRDVMLTAQAADAAIVGIGAINQKDQASILKSGYITQGEQLMIGRKGAVGDILGYFFDAHGEIIPGIKIHNELIGLKLNSLSTIPTVIGVAGGEQKAEAIIAAMRGNYINALVTDQKTAGKIIQLIEK.

The segment at residues 32 to 55 (QSEISERLGLTRLKVSRLLEKGHQ) is a DNA-binding region (H-T-H motif).

Belongs to the SorC transcriptional regulatory family.

It localises to the cytoplasm. With respect to regulation, inactivated by phosphorylated autoinducer-2 (phospho-AI-2). Phospho-AI-2 acts by binding to LsrR, which is then unable to bind to the promoter regions, allowing the transcription of the target genes. Its function is as follows. Transcriptional regulator that represses the expression of the lsr operon in the absence of the quorum-sensing signaling molecule autoinducer 2 (AI-2). It also represses the expression of the lsrRK operon. Acts by binding to the intergenic region between the lsr operon and lsrR. In the presence of phosphorylated autoinducer-2 (phospho-AI-2), LsrR is inactivated, leading to the transcription of the genes. This chain is Transcriptional regulator LsrR (lsrR), found in Salmonella choleraesuis (strain SC-B67).